Consider the following 118-residue polypeptide: MARIAGINIPDQKHTVIALTAIYGIGKTRAKAICAVTGIAEDVKIRELSEEQIEKLREEVGKFTVEGDLRREVTLSIKRLLDLGCYRGLRHRRSLPVRGQRTKTNARTRKGPRKPIKK.

Positions 94-118 (SLPVRGQRTKTNARTRKGPRKPIKK) are disordered.

The protein belongs to the universal ribosomal protein uS13 family. As to quaternary structure, part of the 30S ribosomal subunit. Forms a loose heterodimer with protein S19. Forms two bridges to the 50S subunit in the 70S ribosome.

Located at the top of the head of the 30S subunit, it contacts several helices of the 16S rRNA. In the 70S ribosome it contacts the 23S rRNA (bridge B1a) and protein L5 of the 50S subunit (bridge B1b), connecting the 2 subunits; these bridges are implicated in subunit movement. Contacts the tRNAs in the A and P-sites. The sequence is that of Small ribosomal subunit protein uS13 from Actinobacillus pleuropneumoniae serotype 5b (strain L20).